Consider the following 427-residue polypeptide: Glutamate-1-semialdehyde 2,1-aminomutase (427 aa).

Residue lysine 265 is modified to N6-(pyridoxal phosphate)lysine.

Belongs to the class-III pyridoxal-phosphate-dependent aminotransferase family. HemL subfamily. Homodimer. Pyridoxal 5'-phosphate serves as cofactor.

The protein resides in the cytoplasm. The catalysed reaction is (S)-4-amino-5-oxopentanoate = 5-aminolevulinate. Its pathway is porphyrin-containing compound metabolism; protoporphyrin-IX biosynthesis; 5-aminolevulinate from L-glutamyl-tRNA(Glu): step 2/2. The sequence is that of Glutamate-1-semialdehyde 2,1-aminomutase from Mannheimia succiniciproducens (strain KCTC 0769BP / MBEL55E).